The primary structure comprises 107 residues: U1-lycotoxin-Ls1g (107 aa).

An N-terminal signal peptide occupies residues 1–20 (MMKVLVVVALLVTLISYSSS). Positions 21–41 (EGIDDLEADELLSLMANEQTR) are excised as a propeptide. Disulfide bonds link Cys51-Cys68, Cys58-Cys86, and Cys70-Cys84.

The protein belongs to the neurotoxin 19 (CSTX) family. 04 (U1-Lctx) subfamily. As to expression, expressed by the venom gland.

The protein localises to the secreted. The sequence is that of U1-lycotoxin-Ls1g from Lycosa singoriensis (Wolf spider).